Here is a 596-residue protein sequence, read N- to C-terminus: Succinate dehydrogenase flavoprotein subunit (596 aa).

FAD-binding positions include 18 to 23, 41 to 56, and D225; these read GAGGAG and TKLF…AQGG. A Tele-8alpha-FAD histidine modification is found at H49. H246 and T258 together coordinate substrate. Residue R290 is the Proton acceptor of the active site. H357 lines the substrate pocket. Residue E391 participates in FAD binding. R402 contributes to the substrate binding site. Position 407–408 (407–408) interacts with FAD; sequence SL.

The protein belongs to the FAD-dependent oxidoreductase 2 family. FRD/SDH subfamily. Part of an enzyme complex containing four subunits: a flavoprotein, an iron-sulfur, cytochrome b-556, and a hydrophobic anchor protein. FAD serves as cofactor.

The protein localises to the cell inner membrane. It carries out the reaction a quinone + succinate = fumarate + a quinol. Its pathway is carbohydrate metabolism; tricarboxylic acid cycle; fumarate from succinate (bacterial route): step 1/1. The protein is Succinate dehydrogenase flavoprotein subunit (sdhA) of Rickettsia felis (strain ATCC VR-1525 / URRWXCal2) (Rickettsia azadi).